The primary structure comprises 252 residues: Probable endonuclease 4 (252 aa).

9 residues coordinate Zn(2+): H56, H96, E129, D162, H165, H191, D204, H206, and E233.

Belongs to the AP endonuclease 2 family. Zn(2+) is required as a cofactor.

The catalysed reaction is Endonucleolytic cleavage to 5'-phosphooligonucleotide end-products.. Endonuclease IV plays a role in DNA repair. It cleaves phosphodiester bonds at apurinic or apyrimidinic (AP) sites, generating a 3'-hydroxyl group and a 5'-terminal sugar phosphate. This chain is Probable endonuclease 4, found in Mycobacterium marinum (strain ATCC BAA-535 / M).